The chain runs to 343 residues: N-acetyl-gamma-glutamyl-phosphate reductase (343 aa).

Residue cysteine 147 is part of the active site.

The protein belongs to the NAGSA dehydrogenase family. Type 1 subfamily.

The protein resides in the cytoplasm. It catalyses the reaction N-acetyl-L-glutamate 5-semialdehyde + phosphate + NADP(+) = N-acetyl-L-glutamyl 5-phosphate + NADPH + H(+). The protein operates within amino-acid biosynthesis; L-arginine biosynthesis; N(2)-acetyl-L-ornithine from L-glutamate: step 3/4. Catalyzes the NADPH-dependent reduction of N-acetyl-5-glutamyl phosphate to yield N-acetyl-L-glutamate 5-semialdehyde. This is N-acetyl-gamma-glutamyl-phosphate reductase from Staphylococcus aureus (strain Mu3 / ATCC 700698).